Here is a 333-residue protein sequence, read N- to C-terminus: Protoheme IX farnesyltransferase (333 aa).

Over residues 1–13 the composition is skewed to low complexity; the sequence is MVSSTSQIISTSP. The disordered stretch occupies residues 1 to 21; that stretch reads MVSSTSQIISTSPSRDDVVPS. The next 8 helical transmembrane spans lie at 38–58, 63–83, 109–129, 132–152, 160–180, 188–208, 245–265, and 286–306; these read LIPL…GWPL, LACT…LNCL, AVFT…VSGV, LAAG…TAFL, IVIG…AATG, WLFA…AILL, CFGV…LVPF, and AKGL…LLVV.

Belongs to the UbiA prenyltransferase family. Protoheme IX farnesyltransferase subfamily.

The protein resides in the cell inner membrane. It carries out the reaction heme b + (2E,6E)-farnesyl diphosphate + H2O = Fe(II)-heme o + diphosphate. Its pathway is porphyrin-containing compound metabolism; heme O biosynthesis; heme O from protoheme: step 1/1. Converts heme B (protoheme IX) to heme O by substitution of the vinyl group on carbon 2 of heme B porphyrin ring with a hydroxyethyl farnesyl side group. The polypeptide is Protoheme IX farnesyltransferase (Prochlorococcus marinus (strain SARG / CCMP1375 / SS120)).